We begin with the raw amino-acid sequence, 463 residues long: MGRLFGTDGVRGVANRELTPELVLALGAAAARCLANSGEPGRRVAVIGRDPRASGEMLEAAVIAGLTSAGVDALRVGVLPTPAVAYLTGAYDADFGVMISASHNPMVDNGIKIFGPGGHKLDDDTEDQIEDLVTGGPGLRPAGVAIGRVIDAEDATERYLRHVGKASTIRLDGLTVVVDCAHGAASSAAPRAYRAAGARVIAINADPNGININDRCGSTDLGSLRSAVLAHRADLGLAHDGDADRCLAVDANGDLVDGDAIMVVLALAMQEAGELSSNTLVTTVMSNLGLHLAMRSVGVIVRTTDVGDRYVLEELRAGDFSLGGEQSGHIVMPALGSTGDGIITGLRLMTRMVQTSSSLAALASAMRALPQVLINVEVADKTTAAAAPLVQTAVETAEVELGNTGRILLRPSGTEPMIRVMVEAAEEDVAHRVATRVAAAVSAQGSPLRCWNPDAISGVELRL.

Catalysis depends on S102, which acts as the Phosphoserine intermediate. Positions 102, 240, 242, and 244 each coordinate Mg(2+). S102 is modified (phosphoserine).

It belongs to the phosphohexose mutase family. The cofactor is Mg(2+). Post-translationally, activated by phosphorylation.

It carries out the reaction alpha-D-glucosamine 1-phosphate = D-glucosamine 6-phosphate. Functionally, catalyzes the conversion of glucosamine-6-phosphate to glucosamine-1-phosphate. The protein is Phosphoglucosamine mutase of Mycobacterium leprae (strain Br4923).